We begin with the raw amino-acid sequence, 627 residues long: MTTSAQILPLVKDPERLEARLSEIPPEPGVYFMRDGSDRIIYIGKSRKLRSRVRSYFREGYNKTERIATMAKLVTEIEFIVTDTEAEALALEANLIKQHQPYFNVLLKDDKKYPYVCITWSEDYPRIFITRKRQLGKEKDKYYGPYTDSGLLREILRISKRIFALRQRPQPLFKDRPCLNYDLGRCPGVCQQLISPEEYRKTVQKVAMVFQGRTQELIDILSEQMEKAAEALNFEVAARIRDQIAGLKSLTAEQKVSLPDDTVSRDAIALAGDAQHACIQLFQIRAGQLVGRLAFVAESHAEPGAILQRVLEEHYQTAESVEIPAEILVQHELPDAEILADVLTQLKGRKVTIFTPQRQVKAELIEMVERNAQYELQRMQKLGDRNHQATQDLAAILDLPNLPHRIEGYDISHIQGSNAVASQVVFIDGLPAKQNYRHYKIKNPTVTIGHSDDFASLAEVIQRRFRKYAEDPQLSRVGNPDWPDLIMIDGGKGQLSSVVTVLQEMNLLEDLRVISLAKRREEIFLPGESQPLKTDAEQPGVQLLRRLRDEAHRFAVSFHRQQRSDKLKRSRLDEIPGLGHHRQKQMLAHFRSVDYIRQATPSQIAEVPGIGPHLAQAIYDYFHPSHL.

The GIY-YIG domain occupies 26-105; the sequence is PEPGVYFMRD…IKQHQPYFNV (80 aa). The UVR domain maps to 215–250; that stretch reads QELIDILSEQMEKAAEALNFEVAARIRDQIAGLKSL.

This sequence belongs to the UvrC family. In terms of assembly, interacts with UvrB in an incision complex.

Its subcellular location is the cytoplasm. In terms of biological role, the UvrABC repair system catalyzes the recognition and processing of DNA lesions. UvrC both incises the 5' and 3' sides of the lesion. The N-terminal half is responsible for the 3' incision and the C-terminal half is responsible for the 5' incision. This Nostoc sp. (strain PCC 7120 / SAG 25.82 / UTEX 2576) protein is UvrABC system protein C.